Here is a 317-residue protein sequence, read N- to C-terminus: uncharacterized protein (317 aa).

The helical transmembrane segment at 11 to 31 threads the bilayer; that stretch reads ALLLVIFGSLIVSFAIFFMVL. PASTA domains lie at 33 to 100, 101 to 174, and 180 to 241; these read NNEI…FISK, GAII…LISK, and DKHV…TIAK.

Its subcellular location is the membrane. This is an uncharacterized protein from Borreliella burgdorferi (strain ATCC 35210 / DSM 4680 / CIP 102532 / B31) (Borrelia burgdorferi).